The primary structure comprises 344 residues: Uroporphyrinogen decarboxylase (344 aa).

Residues 26–30 (RQAGR), Phe-45, Asp-75, Tyr-151, Ser-206, and His-320 each bind substrate.

Belongs to the uroporphyrinogen decarboxylase family. As to quaternary structure, homodimer.

Its subcellular location is the cytoplasm. It carries out the reaction uroporphyrinogen III + 4 H(+) = coproporphyrinogen III + 4 CO2. It functions in the pathway porphyrin-containing compound metabolism; protoporphyrin-IX biosynthesis; coproporphyrinogen-III from 5-aminolevulinate: step 4/4. Its function is as follows. Catalyzes the decarboxylation of four acetate groups of uroporphyrinogen-III to yield coproporphyrinogen-III. The sequence is that of Uroporphyrinogen decarboxylase from Staphylococcus haemolyticus (strain JCSC1435).